Reading from the N-terminus, the 680-residue chain is UvrABC system protein B (680 aa).

The 396-residue stretch at 27–422 (AGALGGVTFQ…GRMAGEHVAE (396 aa)) folds into the Helicase ATP-binding domain. 40-47 (GATGTGKT) is a binding site for ATP. Residues 93–116 (YYDYYQPEAYIPQTDTYIEKSASI) carry the Beta-hairpin motif. The 167-residue stretch at 443–609 (QVDDLLHEIH…PIVKRLDANS (167 aa)) folds into the Helicase C-terminal domain. One can recognise a UVR domain in the interval 641–676 (PELVSQLEIQMRDAAKKLEFEKAAEYRDKIHKLRER).

This sequence belongs to the UvrB family. As to quaternary structure, forms a heterotetramer with UvrA during the search for lesions. Interacts with UvrC in an incision complex.

Its subcellular location is the cytoplasm. The UvrABC repair system catalyzes the recognition and processing of DNA lesions. A damage recognition complex composed of 2 UvrA and 2 UvrB subunits scans DNA for abnormalities. Upon binding of the UvrA(2)B(2) complex to a putative damaged site, the DNA wraps around one UvrB monomer. DNA wrap is dependent on ATP binding by UvrB and probably causes local melting of the DNA helix, facilitating insertion of UvrB beta-hairpin between the DNA strands. Then UvrB probes one DNA strand for the presence of a lesion. If a lesion is found the UvrA subunits dissociate and the UvrB-DNA preincision complex is formed. This complex is subsequently bound by UvrC and the second UvrB is released. If no lesion is found, the DNA wraps around the other UvrB subunit that will check the other stand for damage. The protein is UvrABC system protein B of Gloeobacter violaceus (strain ATCC 29082 / PCC 7421).